A 473-amino-acid chain; its full sequence is Photosystem II CP43 reaction center protein (473 aa).

Residues 1-14 (MKTLYSLRRFYPVE) constitute a propeptide that is removed on maturation. Thr15 carries the N-acetylthreonine modification. Thr15 carries the post-translational modification Phosphothreonine. 5 consecutive transmembrane segments (helical) span residues 69–93 (LFEV…PHLA), 134–155 (LLGP…KDRN), 178–200 (KALY…RKIT), 255–275 (KPFA…LSYS), and 291–312 (WFNN…ASQA). Glu367 lines the [CaMn4O5] cluster pocket. Residues 447–471 (RARAAAAGFEKGIDRDFEPVLSMTP) traverse the membrane as a helical segment.

Belongs to the PsbB/PsbC family. PsbC subfamily. In terms of assembly, PSII is composed of 1 copy each of membrane proteins PsbA, PsbB, PsbC, PsbD, PsbE, PsbF, PsbH, PsbI, PsbJ, PsbK, PsbL, PsbM, PsbT, PsbX, PsbY, PsbZ, Psb30/Ycf12, at least 3 peripheral proteins of the oxygen-evolving complex and a large number of cofactors. It forms dimeric complexes. Requires Binds multiple chlorophylls and provides some of the ligands for the Ca-4Mn-5O cluster of the oxygen-evolving complex. It may also provide a ligand for a Cl- that is required for oxygen evolution. PSII binds additional chlorophylls, carotenoids and specific lipids. as cofactor.

It localises to the plastid. The protein localises to the chloroplast thylakoid membrane. In terms of biological role, one of the components of the core complex of photosystem II (PSII). It binds chlorophyll and helps catalyze the primary light-induced photochemical processes of PSII. PSII is a light-driven water:plastoquinone oxidoreductase, using light energy to abstract electrons from H(2)O, generating O(2) and a proton gradient subsequently used for ATP formation. The polypeptide is Photosystem II CP43 reaction center protein (Calycanthus floridus var. glaucus (Eastern sweetshrub)).